The sequence spans 981 residues: Lateral signaling target protein 2 homolog (981 aa).

Residues 308–462 (PLGSSSIEAP…LESSDDDTDE (155 aa)) are disordered. Low complexity-rich tracts occupy residues 326-356 (TTSS…TTNT), 369-380 (NNHNSNSNSSTN), 390-404 (SPSM…TPTA), and 412-433 (PSHS…PADW). Over residues 434–462 (SDGDDEDEDDDDIEVDEEDLESSDDDTDE) the composition is skewed to acidic residues. Phosphoserine is present on residues Ser-544 and Ser-545. Disordered stretches follow at residues 561 to 642 (EQMQ…SSLS) and 749 to 897 (DNVF…SPPA). Basic residues predominate over residues 576-611 (HSHRHHQRHHHHHHHRHSHQHRQPHPHRTTRSGRKR). The segment covering 630 to 642 (LASGDTSAASSLS) has biased composition (low complexity). The segment covering 760–791 (ATGQRHSAGASMQRNNTIDLASQSGEGSPSGA) has biased composition (polar residues). Ser-805 bears the Phosphoserine mark. 2 stretches are compositionally biased toward low complexity: residues 811–866 (AASS…PVSA) and 883–896 (PSSA…LSPP). The segment at 901 to 961 (DGKAPRCMAC…VCRDCYVREV (61 aa)) adopts an FYVE-type zinc-finger fold. Zn(2+)-binding residues include Cys-907, Cys-910, Cys-923, Cys-926, Cys-931, Cys-934, Cys-953, and Cys-956.

Belongs to the lst-2 family.

Functionally, negative regulator of epidermal growth factor receptor (EGFR) signaling. The protein is Lateral signaling target protein 2 homolog of Drosophila erecta (Fruit fly).